We begin with the raw amino-acid sequence, 576 residues long: Proline--tRNA ligase (576 aa).

Belongs to the class-II aminoacyl-tRNA synthetase family. ProS type 1 subfamily. As to quaternary structure, homodimer.

The protein localises to the cytoplasm. It catalyses the reaction tRNA(Pro) + L-proline + ATP = L-prolyl-tRNA(Pro) + AMP + diphosphate. Functionally, catalyzes the attachment of proline to tRNA(Pro) in a two-step reaction: proline is first activated by ATP to form Pro-AMP and then transferred to the acceptor end of tRNA(Pro). As ProRS can inadvertently accommodate and process non-cognate amino acids such as alanine and cysteine, to avoid such errors it has two additional distinct editing activities against alanine. One activity is designated as 'pretransfer' editing and involves the tRNA(Pro)-independent hydrolysis of activated Ala-AMP. The other activity is designated 'posttransfer' editing and involves deacylation of mischarged Ala-tRNA(Pro). The misacylated Cys-tRNA(Pro) is not edited by ProRS. This Pelobacter propionicus (strain DSM 2379 / NBRC 103807 / OttBd1) protein is Proline--tRNA ligase.